We begin with the raw amino-acid sequence, 220 residues long: uncharacterized protein (220 aa).

Transmembrane regions (helical) follow at residues 25–45 (YFLLGLTLAFSAVVAYISMSL), 50–70 (PGLILMLAGFYGLLFLTYKLS), 74–94 (LGILSTFAFTGFLGYTLGPIL), 105–125 (IVVLALAGTAAVFFACSAYVL), 135–155 (SGTIFALFIVLLLGMVASFFF), 158–178 (PMLYIAISGLFVVFSTLGILY), and 196–216 (VSIFVSLYNLFISLLNIFSIL).

The protein belongs to the BI1 family.

Its subcellular location is the cell membrane. This is an uncharacterized protein from Pasteurella multocida (strain Pm70).